We begin with the raw amino-acid sequence, 222 residues long: UPF0173 metal-dependent hydrolase Nther_2337 (222 aa).

It belongs to the UPF0173 family.

The protein is UPF0173 metal-dependent hydrolase Nther_2337 of Natranaerobius thermophilus (strain ATCC BAA-1301 / DSM 18059 / JW/NM-WN-LF).